Consider the following 199-residue polypeptide: GTP cyclohydrolase-2 (199 aa).

49-53 (RIHSE) provides a ligand contact to GTP. 3 residues coordinate Zn(2+): Cys54, Cys65, and Cys67. GTP contacts are provided by residues Gln70, 92 to 94 (EGR), and Thr114. Asp126 functions as the Proton acceptor in the catalytic mechanism. Arg128 (nucleophile) is an active-site residue. Positions 149 and 154 each coordinate GTP.

The protein belongs to the GTP cyclohydrolase II family. As to quaternary structure, homodimer. The cofactor is Zn(2+).

It catalyses the reaction GTP + 4 H2O = 2,5-diamino-6-hydroxy-4-(5-phosphoribosylamino)-pyrimidine + formate + 2 phosphate + 3 H(+). Its pathway is cofactor biosynthesis; riboflavin biosynthesis; 5-amino-6-(D-ribitylamino)uracil from GTP: step 1/4. Its function is as follows. Catalyzes the conversion of GTP to 2,5-diamino-6-ribosylamino-4(3H)-pyrimidinone 5'-phosphate (DARP), formate and pyrophosphate. The chain is GTP cyclohydrolase-2 from Blochmanniella pennsylvanica (strain BPEN).